Consider the following 375-residue polypeptide: Succinyl-diaminopimelate desuccinylase (375 aa).

Histidine 66 contributes to the Zn(2+) binding site. Residue aspartate 68 is part of the active site. Position 99 (aspartate 99) interacts with Zn(2+). Glutamate 133 serves as the catalytic Proton acceptor. Residues glutamate 134, glutamate 162, and histidine 348 each coordinate Zn(2+).

Belongs to the peptidase M20A family. DapE subfamily. Homodimer. It depends on Zn(2+) as a cofactor. Co(2+) serves as cofactor.

It catalyses the reaction N-succinyl-(2S,6S)-2,6-diaminopimelate + H2O = (2S,6S)-2,6-diaminopimelate + succinate. The protein operates within amino-acid biosynthesis; L-lysine biosynthesis via DAP pathway; LL-2,6-diaminopimelate from (S)-tetrahydrodipicolinate (succinylase route): step 3/3. Its function is as follows. Catalyzes the hydrolysis of N-succinyl-L,L-diaminopimelic acid (SDAP), forming succinate and LL-2,6-diaminopimelate (DAP), an intermediate involved in the bacterial biosynthesis of lysine and meso-diaminopimelic acid, an essential component of bacterial cell walls. This chain is Succinyl-diaminopimelate desuccinylase, found in Yersinia pestis bv. Antiqua (strain Antiqua).